Here is a 407-residue protein sequence, read N- to C-terminus: Actinorhodin polyketide putative beta-ketoacyl synthase 2 (407 aa).

One can recognise a Ketosynthase family 3 (KS3) domain in the interval 1-402 (MSVLITGVGV…GFNSAAVLRR (402 aa)).

The protein belongs to the thiolase-like superfamily. Beta-ketoacyl-ACP synthases family.

The polypeptide is Actinorhodin polyketide putative beta-ketoacyl synthase 2 (Streptomyces coelicolor (strain ATCC BAA-471 / A3(2) / M145)).